We begin with the raw amino-acid sequence, 225 residues long: MNSIEFPLLDRTTQISVISTTSNDLSNWSRLSSLWPLLYGTSCCFIEFASLIGSRFDFDRYGLVPRSSPRQADLILTAGTVTMKMAPSLVRLYEQMPEPKYVIAMGACTITGGMFSTDSYSTVRGVDKLIPVDVYLPGCPPKPEAVIDAITKLRKKISREIYEDRIRSQPGKRCFTTNHKFNIERTTHTGNYDQELLYQSPSTSKIPPETFFKYKRSVSSNELVN.

[4Fe-4S] cluster-binding residues include Cys-43, Cys-44, Cys-108, and Cys-139.

This sequence belongs to the complex I 20 kDa subunit family. As to quaternary structure, NDH is composed of at least 16 different subunits, 5 of which are encoded in the nucleus. The cofactor is [4Fe-4S] cluster.

Its subcellular location is the plastid. The protein localises to the chloroplast thylakoid membrane. The catalysed reaction is a plastoquinone + NADH + (n+1) H(+)(in) = a plastoquinol + NAD(+) + n H(+)(out). It catalyses the reaction a plastoquinone + NADPH + (n+1) H(+)(in) = a plastoquinol + NADP(+) + n H(+)(out). Its function is as follows. NDH shuttles electrons from NAD(P)H:plastoquinone, via FMN and iron-sulfur (Fe-S) centers, to quinones in the photosynthetic chain and possibly in a chloroplast respiratory chain. The immediate electron acceptor for the enzyme in this species is believed to be plastoquinone. Couples the redox reaction to proton translocation, and thus conserves the redox energy in a proton gradient. In Manihot esculenta (Cassava), this protein is NAD(P)H-quinone oxidoreductase subunit K, chloroplastic.